Reading from the N-terminus, the 258-residue chain is Global transcriptional regulator CodY (258 aa).

The GAF domain stretch occupies residues 1–156; it reads MSILLNKTRK…SATIVGLEIL (156 aa). Residues 204-223 constitute a DNA-binding region (H-T-H motif); it reads ASKIADKVGITRSVIVNALR.

Belongs to the CodY family.

Its subcellular location is the cytoplasm. Functionally, DNA-binding global transcriptional regulator which is involved in the adaptive response to starvation and acts by directly or indirectly controlling the expression of numerous genes in response to nutrient availability. During rapid exponential growth, CodY is highly active and represses genes whose products allow adaptation to nutrient depletion. The polypeptide is Global transcriptional regulator CodY (Clostridium acetobutylicum (strain ATCC 824 / DSM 792 / JCM 1419 / IAM 19013 / LMG 5710 / NBRC 13948 / NRRL B-527 / VKM B-1787 / 2291 / W)).